Reading from the N-terminus, the 443-residue chain is ATP-dependent protease ATPase subunit HslU (443 aa).

Residues V18, 60-65, D255, E321, and R393 contribute to the ATP site; that span reads GVGKTE.

Belongs to the ClpX chaperone family. HslU subfamily. A double ring-shaped homohexamer of HslV is capped on each side by a ring-shaped HslU homohexamer. The assembly of the HslU/HslV complex is dependent on binding of ATP.

It is found in the cytoplasm. Its function is as follows. ATPase subunit of a proteasome-like degradation complex; this subunit has chaperone activity. The binding of ATP and its subsequent hydrolysis by HslU are essential for unfolding of protein substrates subsequently hydrolyzed by HslV. HslU recognizes the N-terminal part of its protein substrates and unfolds these before they are guided to HslV for hydrolysis. This Colwellia psychrerythraea (strain 34H / ATCC BAA-681) (Vibrio psychroerythus) protein is ATP-dependent protease ATPase subunit HslU.